The primary structure comprises 53 residues: uncharacterized protein (53 aa).

This is an uncharacterized protein from Archaeoglobus fulgidus (strain ATCC 49558 / DSM 4304 / JCM 9628 / NBRC 100126 / VC-16).